The chain runs to 325 residues: GMP reductase (325 aa).

C174 (thioimidate intermediate) is an active-site residue. Residue I203–V226 coordinates NADP(+).

This sequence belongs to the IMPDH/GMPR family. GuaC type 2 subfamily.

The catalysed reaction is IMP + NH4(+) + NADP(+) = GMP + NADPH + 2 H(+). Catalyzes the irreversible NADPH-dependent deamination of GMP to IMP. It functions in the conversion of nucleobase, nucleoside and nucleotide derivatives of G to A nucleotides, and in maintaining the intracellular balance of A and G nucleotides. The chain is GMP reductase from Staphylococcus epidermidis (strain ATCC 35984 / DSM 28319 / BCRC 17069 / CCUG 31568 / BM 3577 / RP62A).